The primary structure comprises 183 residues: CKLF-like MARVEL transmembrane domain-containing protein 6 (183 aa).

An N-acetylmethionine modification is found at Met-1. Topologically, residues 1-39 (MENGAVYSPTTEEDPGPARGPRSGLAAYFFMGRLPLLRR) are cytoplasmic. Phosphoserine is present on Ser-8. The MARVEL domain occupies 33–160 (RLPLLRRVLK…DFITMLYEKR (128 aa)). Residues 40–60 (VLKGLQLLLSLLAFICEEVVS) form a helical membrane-spanning segment. Over 61–67 (QCTLCGG) the chain is Extracellular. A helical transmembrane segment spans residues 68-88 (LYFFEFVSCSAFLLSLLILIV). The Cytoplasmic segment spans residues 89–106 (YCTPFYERVDTTKVKSSD). The helical transmembrane segment at 107 to 127 (FYITLGTGCVFLLASIIFVST) threads the bilayer. Residues 128–134 (HDRTSAE) lie on the Extracellular side of the membrane. The helical transmembrane segment at 135 to 155 (IAAIVFGFIASFMFLLDFITM) threads the bilayer. The Cytoplasmic portion of the chain corresponds to 156–183 (LYEKRQESQLRKPENTTRAEALTEPLNA). A Phosphothreonine modification is found at Thr-171.

The protein belongs to the chemokine-like factor family. Interacts with PD-L1/CD274 (via transmembrane domain); the interaction is direct. Interacts with CMTM4. Interacts with CD58, ARG1, ENO1 and TMPO. In terms of tissue distribution, expressed in the leukocytes, placenta and testis.

The protein resides in the cell membrane. Its subcellular location is the early endosome membrane. It localises to the recycling endosome membrane. Functionally, master regulator of recycling and plasma membrane expression of PD-L1/CD274, an immune inhibitory ligand critical for immune tolerance to self and antitumor immunity. Associates with both constitutive and IFNG-induced PD-L1/CD274 at recycling endosomes, where it protects PD-L1/CD274 from being targeted for lysosomal degradation, likely by preventing its STUB1-mediated ubiquitination. May stabilize PD-L1/CD274 expression on antigen presenting cells and potentiates inhibitory signaling by PDCD1/CD279, its receptor on T-cells, ultimately triggering T-cell anergy. The sequence is that of CKLF-like MARVEL transmembrane domain-containing protein 6 from Homo sapiens (Human).